Here is a 420-residue protein sequence, read N- to C-terminus: Nucleobindin-2 (420 aa).

The signal sequence occupies residues 1–24; sequence MRWRTIQARYCFLLVPCVLTALEA. Residues 171–223 mediate DNA binding; the sequence is RTRHEEFKKYEMMKEHERREYLKTLSEEKRKEEEAKFAEMKRKHEDHPKVNHP. The tract at residues 194–225 is disordered; it reads TLSEEKRKEEEAKFAEMKRKHEDHPKVNHPGS. The interval 213-420 is binds to necdin; the sequence is KHEDHPKVNH…AGELKFEPHT (208 aa). EF-hand domains follow at residues 241 to 276 and 293 to 328; these read PNDFDPKTFFKLHDVNNDGFLDEQELEALFTKELDK and ERLRMREHVMNEIDNNKDRLVTLEEFLRATEKKEFL. The Ca(2+) site is built by aspartate 254, asparagine 256, aspartate 258, glutamate 265, aspartate 306, asparagine 308, aspartate 310, and glutamate 317. The short motif at 304 to 334 is the GBA element; it reads EIDNNKDRLVTLEEFLRATEKKEFLEPDSWE. The residue at position 332 (serine 332) is a Phosphoserine. Over residues 366-386 the composition is skewed to basic and acidic residues; the sequence is DELQKQKEELQRQHDHLEAQK. Residues 366–420 are disordered; sequence DELQKQKEELQRQHDHLEAQKQEYQQAVQQLEQKKFQQGIAPSGPAGELKFEPHT. Residues 387-396 are compositionally biased toward low complexity; sequence QEYQQAVQQL.

Belongs to the nucleobindin family. In terms of assembly, interacts (via GBA motif) with guanine nucleotide-binding protein G(i) alpha subunit GNAI3. Preferentially interacts with inactive rather than active GNAI3. Interaction with GNAI3 is inhibited when NUCB2 binds calcium, probably due to a conformational change which renders the GBA motif inaccessible. Binds to the postmitotic growth suppressor NDN; coexpression abolishes NUCB2 secretion. Interacts with MC4R.

It localises to the golgi apparatus. It is found in the endoplasmic reticulum. The protein resides in the nucleus envelope. Its subcellular location is the membrane. The protein localises to the cytoplasm. It localises to the secreted. In terms of biological role, calcium-binding protein which may have a role in calcium homeostasis. Acts as a non-receptor guanine nucleotide exchange factor which binds to and activates guanine nucleotide-binding protein (G-protein) alpha subunit GNAI3. Anorexigenic peptide, seems to play an important role in hypothalamic pathways regulating food intake and energy homeostasis, acting in a leptin-independent manner. May also exert hypertensive roles and modulate blood pressure through directly acting on peripheral arterial resistance. In intestinal epithelial cells, plays a role in the inhibition of hepatic glucose production via MC4R receptor leading to increased cyclic adenosine monophosphate (cAMP) levels and glucagon-like peptide 1 (GLP-1) secretion. This is Nucleobindin-2 (Nucb2) from Rattus norvegicus (Rat).